The following is a 358-amino-acid chain: Uroporphyrinogen decarboxylase (358 aa).

Substrate is bound by residues 36–40, Asp-85, Tyr-160, Ser-215, and His-338; that span reads RQAGR.

It belongs to the uroporphyrinogen decarboxylase family. Homodimer.

It localises to the cytoplasm. The enzyme catalyses uroporphyrinogen III + 4 H(+) = coproporphyrinogen III + 4 CO2. The protein operates within porphyrin-containing compound metabolism; protoporphyrin-IX biosynthesis; coproporphyrinogen-III from 5-aminolevulinate: step 4/4. Functionally, catalyzes the decarboxylation of four acetate groups of uroporphyrinogen-III to yield coproporphyrinogen-III. The chain is Uroporphyrinogen decarboxylase from Corynebacterium glutamicum (strain R).